We begin with the raw amino-acid sequence, 611 residues long: Chaperone protein DnaK (611 aa).

Thr-173 is modified (phosphothreonine; by autocatalysis). Residues 577–592 (QAAAGQAEGAEGAQDA) show a composition bias toward low complexity. The segment at 577 to 598 (QAAAGQAEGAEGAQDAGAKKDN) is disordered.

The protein belongs to the heat shock protein 70 family.

Acts as a chaperone. In Bacillus anthracis (strain A0248), this protein is Chaperone protein DnaK.